Reading from the N-terminus, the 452-residue chain is Glutamyl-tRNA(Gln) amidotransferase subunit A (452 aa).

Residues Lys56 and Ser131 each act as charge relay system in the active site. Catalysis depends on Ser155, which acts as the Acyl-ester intermediate.

The protein belongs to the amidase family. GatA subfamily. In terms of assembly, heterotrimer of A, B and C subunits.

It catalyses the reaction L-glutamyl-tRNA(Gln) + L-glutamine + ATP + H2O = L-glutaminyl-tRNA(Gln) + L-glutamate + ADP + phosphate + H(+). Allows the formation of correctly charged Gln-tRNA(Gln) through the transamidation of misacylated Glu-tRNA(Gln) in organisms which lack glutaminyl-tRNA synthetase. The reaction takes place in the presence of glutamine and ATP through an activated gamma-phospho-Glu-tRNA(Gln). This Campylobacter concisus (strain 13826) protein is Glutamyl-tRNA(Gln) amidotransferase subunit A.